The sequence spans 153 residues: UPF0260 protein Plav_0898 (153 aa).

This sequence belongs to the UPF0260 family.

In Parvibaculum lavamentivorans (strain DS-1 / DSM 13023 / NCIMB 13966), this protein is UPF0260 protein Plav_0898.